We begin with the raw amino-acid sequence, 77 residues long: Large ribosomal subunit protein bL28 (77 aa).

The protein belongs to the bacterial ribosomal protein bL28 family.

The protein is Large ribosomal subunit protein bL28 of Acidovorax ebreus (strain TPSY) (Diaphorobacter sp. (strain TPSY)).